We begin with the raw amino-acid sequence, 210 residues long: Holliday junction resolvase RecU (210 aa).

A disordered region spans residues 1 to 34; the sequence is MAFHYPNGQPYSNHETKQPKKQGRHTSPTTLYGK. Mg(2+) is bound by residues T90, D92, E105, and Q124.

The protein belongs to the RecU family. The cofactor is Mg(2+).

The protein resides in the cytoplasm. It carries out the reaction Endonucleolytic cleavage at a junction such as a reciprocal single-stranded crossover between two homologous DNA duplexes (Holliday junction).. Its function is as follows. Endonuclease that resolves Holliday junction intermediates in genetic recombination. Cleaves mobile four-strand junctions by introducing symmetrical nicks in paired strands. Promotes annealing of linear ssDNA with homologous dsDNA. Required for DNA repair, homologous recombination and chromosome segregation. The protein is Holliday junction resolvase RecU of Latilactobacillus sakei subsp. sakei (strain 23K) (Lactobacillus sakei subsp. sakei).